We begin with the raw amino-acid sequence, 224 residues long: Oxalate oxidase GF-2.8 (224 aa).

Positions 1-23 (MGYSKTLVAGLFAMLLLAPAVLA) are cleaved as a signal peptide. Cys33 and Cys49 are disulfide-bonded. The Cupin type-1 domain maps to 63–214 (SKLAKAGNTS…ALRVEARVVE (152 aa)). Residues Asn70 and Asn75 are each glycosylated (N-linked (GlcNAc...) asparagine). Residues His111, His113, Glu118, and His160 each contribute to the Mn(2+) site.

Belongs to the germin family. As to quaternary structure, oligomer (believed to be a pentamer but probably hexamer).

Its subcellular location is the secreted. It is found in the extracellular space. It localises to the apoplast. The protein resides in the cytoplasm. The protein localises to the cell wall. The catalysed reaction is oxalate + O2 + 2 H(+) = H2O2 + 2 CO2. Functionally, produces developmental and stress-related release of hydrogen peroxide in the apoplast. May play an important role in several aspects of plant growth and defense mechanisms. The sequence is that of Oxalate oxidase GF-2.8 from Triticum aestivum (Wheat).